A 478-amino-acid chain; its full sequence is MATITCTRFTEEYQLFEELGKGAFSVVRRCVKVLAGQEYAAKIINTKKLSARDHQKLEREARICRLLKHPNIVRLHDSISEEGHHYLIFDLVTGGELFEDIVAREYYSEADASHCIQQILEAVLHCHQMGVVHRDLKPENLLLASKLKGAAVKLADFGLAIEVEGEQQAWFGFAGTPGYLSPEVLRKDPYGKPVDLWACGVILYILLVGYPPFWDEDQHRLYQQIKAGAYDFPSPEWDTVTPEAKDLINKMLTINPSKRITAAEALKHPWISHRSTVASCMHRQETVDCLKKFNARRKLKGAILTTMLATRNFSGGKSGGNKKSDGVKESSESTNTTIEDEDTKVRKQEIIKVTEQLIEAISNGDFESYTKMCDPGMTAFEPEALGNLVEGLDFHRFYFENLWSRNSKPVHTTILNPHIHLMGDESACIAYIRITQYLDAGGIPRTAQSEETRVWHRRDGKWQIVHFHRSGAPSVLPH.

Tyr13 is modified (phosphotyrosine). The region spanning 13–271 (YQLFEELGKG…AAEALKHPWI (259 aa)) is the Protein kinase domain. ATP-binding positions include 19–27 (LGKGAFSVV) and Lys42. The active-site Proton acceptor is Asp135. Ser257 bears the Phosphoserine mark. Thr286 is modified (phosphothreonine; by autocatalysis). The interval 290 to 300 (LKKFNARRKLK) is calmodulin-binding. The tract at residues 310-320 (TRNFSGGKSGG) is interaction with BAALC. Residues 314–341 (SGGKSGGNKKSDGVKESSESTNTTIEDE) form a disordered region. Positions 322-331 (KKSDGVKESS) are enriched in basic and acidic residues. Phosphoserine occurs at positions 330, 331, and 333. 2 positions are modified to phosphothreonine: Thr336 and Thr337. Ser404 carries the phosphoserine modification.

The protein belongs to the protein kinase superfamily. CAMK Ser/Thr protein kinase family. CaMK subfamily. In terms of assembly, there are 4 genes encoding calcium/calmodulin-dependent protein kinase type II chains: CAMK2A, CAMK2B, CAMK2G and CAMK2D. The corresponding proteins assemble into homo- or heteromultimeric holoenzymes composed of 12 subunits with two hexameric rings stacked one on top of the other. Interacts with BAALC. Interacts with MPDZ. Interacts with SYN1. Interacts with CAMK2N2. Interacts with SYNGAP1. Interacts with SYNPO2. Interacts with SHANK3. Interacts with GRIN2B. Interacts with CACNB2. Interacts with LRRC7. Interacts with GRM5. Interacts with DAGLA (via C-terminal); this interaction is enhanced by autophosphorylation of CAMK2A at Thr-286. Interacts with CAMK2N1; this interaction requires CAMK2A activation by Ca(2+). It depends on Mg(2+) as a cofactor. Autophosphorylation of Thr-286 following activation by Ca(2+)/calmodulin. Phosphorylation of Thr-286 locks the kinase into an activated state. Post-translationally, palmitoylated. Probably palmitoylated by ZDHHC3 and ZDHHC7.

The protein resides in the synapse. It localises to the postsynaptic density. Its subcellular location is the cell projection. The protein localises to the dendritic spine. It is found in the dendrite. It catalyses the reaction L-seryl-[protein] + ATP = O-phospho-L-seryl-[protein] + ADP + H(+). The enzyme catalyses L-threonyl-[protein] + ATP = O-phospho-L-threonyl-[protein] + ADP + H(+). Its activity is regulated as follows. Activated by Ca(2+)/calmodulin. Binding of calmodulin results in conformational change that relieves intrasteric autoinhibition and allows autophosphorylation of Thr-286 which turns the kinase in a constitutively active form and confers to the kinase a Ca(2+)-independent activity. Functionally, calcium/calmodulin-dependent protein kinase that functions autonomously after Ca(2+)/calmodulin-binding and autophosphorylation, and is involved in various processes, such as synaptic plasticity, neurotransmitter release and long-term potentiation. Member of the NMDAR signaling complex in excitatory synapses, it regulates NMDAR-dependent potentiation of the AMPAR and therefore excitatory synaptic transmission. Regulates dendritic spine development. Also regulates the migration of developing neurons. Phosphorylates the transcription factor FOXO3 to activate its transcriptional activity. Phosphorylates the transcription factor ETS1 in response to calcium signaling, thereby decreasing ETS1 affinity for DNA. In response to interferon-gamma (IFN-gamma) stimulation, catalyzes phosphorylation of STAT1, stimulating the JAK-STAT signaling pathway. In response to interferon-beta (IFN-beta) stimulation, stimulates the JAK-STAT signaling pathway. Acts as a negative regulator of 2-arachidonoylglycerol (2-AG)-mediated synaptic signaling via modulation of DAGLA activity. The polypeptide is Calcium/calmodulin-dependent protein kinase type II subunit alpha (CAMK2A) (Pongo abelii (Sumatran orangutan)).